The following is a 324-amino-acid chain: MSAGGEHLNEEGNRIQVVAAGATAGLVSRFCVAPLDVVKIRLQLQIHSLSDPLSHRDIKGPIYKGTISTLKSIFRDEGITGLWKGNIPAELLYICYGGIQFSSYRAISSALRTLPHPLPQPVESFISGAVAGGIATTSTYPLDLLRTRFAAQGNDRIYASLRVSVRDIARTEGPHGFFRGATAAIAQIVPYMGLFFAGYEALRSPIASLELPFGTGDAGAGVVASVIAKTGVFPLDLVRKRLQVQGPTRRRYIHTNIPVYEGVYRTIRAILASQGPKGLYRGLTVSLIKAAPASAVTMWTYEHVLGLLKDMNCGDDEDDGGGGI.

Solcar repeat units follow at residues 12 to 110, 119 to 205, and 212 to 307; these read GNRI…ISSA, PQPV…LRSP, and PFGT…VLGL. Transmembrane regions (helical) follow at residues 15 to 35, 79 to 99, 125 to 145, 182 to 202, 218 to 238, and 282 to 299; these read IQVV…VAPL, ITGL…YGGI, FISG…LDLL, TAAI…YEAL, AGAG…LDLV, and GLTV…VTMW.

This sequence belongs to the mitochondrial carrier (TC 2.A.29) family.

It localises to the mitochondrion inner membrane. Its function is as follows. Mitochondrial transporter that mediates uptake of thiamine pyrophosphate (ThPP) into mitochondria. The chain is Mitochondrial thiamine pyrophosphate carrier 1 (TPC1) from Ajellomyces capsulatus (strain NAm1 / WU24) (Darling's disease fungus).